The chain runs to 241 residues: Glutathione S-transferase omega-1 (241 aa).

S2 is modified (N-acetylserine). Positions 22 to 101 (GQIRVYSMRF…YLDEAYPEKK (80 aa)) constitute a GST N-terminal domain. The active-site Nucleophile is the C32. Residue K57 is modified to N6-acetyllysine. Glutathione contacts are provided by residues K59, V72, and 85-86 (ES). The 123-residue stretch at 106-228 (DPYEKACQKM…AKTYRDYLSL (123 aa)) folds into the GST C-terminal domain. S129 is modified (phosphoserine). 3 positions are modified to N6-acetyllysine: K143, K148, and K152.

It belongs to the GST superfamily. Omega family. Homodimer.

It is found in the cytoplasm. The protein localises to the cytosol. It catalyses the reaction RX + glutathione = an S-substituted glutathione + a halide anion + H(+). The catalysed reaction is L-dehydroascorbate + 2 glutathione = glutathione disulfide + L-ascorbate. It carries out the reaction methylarsonate + 2 glutathione + H(+) = methylarsonous acid + glutathione disulfide + H2O. Its function is as follows. Exhibits glutathione-dependent thiol transferase and dehydroascorbate reductase activities. Has S-(phenacyl)glutathione reductase activity. Also has glutathione S-transferase activity. Participates in the biotransformation of inorganic arsenic and reduces monomethylarsonic acid (MMA) and dimethylarsonic acid. The polypeptide is Glutathione S-transferase omega-1 (Gsto1) (Rattus norvegicus (Rat)).